The following is a 405-amino-acid chain: 5-azacytidine-induced protein 2 (405 aa).

Residues 1–198 (MDTLVEDDIC…TELQKARQTG (198 aa)) form a homodimerization region. A coiled-coil region spans residues 40–197 (ALVTAYEDIK…RTELQKARQT (158 aa)). The interval 229–270 (SDNMQHAYWELKREMSNLHLVTQVQAELLRKLKTSAAVKKAC) is interaction with TBK1 and IKBKE. Residues S331 and S366 each carry the phosphoserine modification. The segment at 357-377 (LEDNSWVFPSPPKSSETAFGE) is disordered.

Homodimer. Interacts with IKBKE and TBK1. Interacts with TICAM1. Interacts with TAX1BP1. Interacts with CALCOCO2. Ubiquitinated via 'Lys-48'-linked polyubiquitination by TRIM38, leading to its degradation. Testis, ovary, heart, lung, kidney and brain. Expressed mainly in the spermatocytes or spermatids in the testis.

Its subcellular location is the cytoplasm. Its function is as follows. Adapter protein which binds TBK1 and IKBKE playing a role in antiviral innate immunity. Activates serine/threonine-protein kinase TBK1 and facilitates its oligomerization. Enhances the phosphorylation of NF-kappa-B p65 subunit RELA by TBK1. Promotes TBK1-induced as well as TNF-alpha or PMA-induced activation of NF-kappa-B. Participates in IFNB promoter activation via TICAM1. This Mus musculus (Mouse) protein is 5-azacytidine-induced protein 2 (Azi2).